The primary structure comprises 111 residues: Ferredoxin-thioredoxin reductase, catalytic chain (111 aa).

Cysteine 52 contacts [4Fe-4S] cluster. The Nucleophile role is filled by cysteine 54. A disulfide bridge links cysteine 54 with cysteine 84. The [4Fe-4S] cluster site is built by cysteine 71, cysteine 73, and cysteine 82.

Belongs to the ferredoxin thioredoxin reductase beta subunit family. In terms of assembly, heterodimer of subunit A (variable subunit) and subunit B (catalytic subunit). Heterodimeric FTR forms a complex with ferredoxin and thioredoxin. Requires [4Fe-4S] cluster as cofactor.

It localises to the plastid. Its subcellular location is the chloroplast. It catalyses the reaction [thioredoxin]-disulfide + 2 reduced [2Fe-2S]-[ferredoxin] + 2 H(+) = [thioredoxin]-dithiol + 2 oxidized [2Fe-2S]-[ferredoxin]. Catalytic subunit of the ferredoxin-thioredoxin reductase (FTR), which catalyzes the two-electron reduction of thioredoxins by the electrons provided by reduced ferredoxin. The protein is Ferredoxin-thioredoxin reductase, catalytic chain (ftrB) of Cyanidium caldarium (Red alga).